The primary structure comprises 783 residues: Transcription factor E4F1 (783 aa).

A required for ubiquitin ligase activity region spans residues 40–84 (GFLGLPAPFSEEDEDDVHRCGRCQVEFTALEDFVQHKIQKTCHRA). S49 carries the phosphoserine modification. Residues 185–264 (LLVNKEGRYV…GKSFRESGAL (80 aa)) form a mediates dimerization, DNA-binding, transcription repression of CCNA2 and interaction with HMGA2 region. 2 C2H2-type zinc fingers span residues 193–215 (YVCMLCHKTFKTGSILKAHMVTH) and 221–243 (HECKLCGASFRTKGSLIRHHRRH). A C2H2-type 3; degenerate zinc finger spans residues 249–273 (YKCAKCGKSFRESGALTRHLKSLTP). Residues 368–565 (NLLHQAMQNS…REKGSLVRHV (198 aa)) are mediates interaction with CDKN2A. The segment at 386 to 407 (GEESALEPAPPSGSSPQCLGDG) is disordered. 5 C2H2-type zinc fingers span residues 434-456 (HPCPQCSETFPTAATLEAHKRGH), 462-484 (FTCTQCGKAFPKAYLLKKHQEVH), 490-512 (FRCGDCGKLYKTIAHVRGHRRVH), 518-540 (FPCPQCGKRYKTKNAQQVHFRTH), and 546-568 (HVCQFCSRGFREKGSLVRHVRHH). The interval 434–598 (HPCPQCSETF…LNRHLRTKGG (165 aa)) is interaction with BMI1. Residues 520–579 (CPQCGKRYKTKNAQQVHFRTHLEEKPHVCQFCSRGFREKGSLVRHVRHHTGEKPFKCYKC) are mediates interaction with TP53. Residues 574–596 (FKCYKCGRGFAEHGTLNRHLRTK) form a C2H2-type 9; degenerate zinc finger. Positions 574–596 (FKCYKCGRGFAEHGTLNRHLRTK) are mediates interaction with RASSF1.

Homodimer; binds DNA as a dimer. Forms a complex with CDKN2A and TP53. Interacts with HDAC1, HMGA2 and RASSF1. Interactions with TP53, RB1, ANP32A and probably BMI1 and FHL2 regulate E4F1 activity. Post-translationally, phosphorylated; phosphorylation is cell cycle-dependent and regulates DNA-binding activity and function. In terms of processing, may be sumoylated by UBE2I upon interaction with CDKN2A. In terms of tissue distribution, ubiquitously expressed.

It is found in the nucleus. The protein localises to the nucleoplasm. The protein resides in the cytoplasm. The enzyme catalyses S-ubiquitinyl-[E2 ubiquitin-conjugating enzyme]-L-cysteine + [acceptor protein]-L-lysine = [E2 ubiquitin-conjugating enzyme]-L-cysteine + N(6)-ubiquitinyl-[acceptor protein]-L-lysine.. It participates in protein modification; protein ubiquitination. Its function is as follows. May function as a transcriptional repressor. May also function as a ubiquitin ligase mediating ubiquitination of chromatin-associated TP53. Functions in cell survival and proliferation through control of the cell cycle. Functions in the p53 and pRB tumor suppressor pathways and regulates the cyclin CCNA2 transcription. The sequence is that of Transcription factor E4F1 (E4f1) from Mus musculus (Mouse).